Consider the following 64-residue polypeptide: Disintegrin (64 aa).

The region spanning 1-64 is the Disintegrin domain; it reads NSVHPCCDPV…SDCPRNRYNH (64 aa). Intrachain disulfides connect Cys-6/Cys-29, Cys-20/Cys-26, Cys-25/Cys-50, and Cys-38/Cys-57. Positions 42 to 44 match the Cell attachment site; atypical (MLD) motif; it reads MLD.

Belongs to the disintegrin family. Dimeric disintegrin subfamily. In terms of assembly, heterodimer; disulfide-linked. In terms of tissue distribution, expressed by the venom gland.

The protein localises to the secreted. In terms of biological role, inhibits adhesion of cells expressing alpha-4/beta-1 (ITGA4/ITGB1) and alpha-4/beta-7 (ITGA4/ITGB7) integrins to the natural ligands vascular cell adhesion molecule 1 (VCAM-1) and mucosal addressin cell adhesion molecule 1 (MADCAM-1). The polypeptide is Disintegrin (Echis carinatus (Saw-scaled viper)).